An 807-amino-acid chain; its full sequence is F-box protein YLR352W (807 aa).

The F-box domain occupies 220 to 266 (LNDCIDLPSHVLWKILKMLPELQKLDLSHTSIDDSTLYHGIPHWKNL). Residues 607 to 616 (DNNSHVEDSQ) show a composition bias toward basic and acidic residues. Disordered stretches follow at residues 607–647 (DNNS…NPFA) and 716–739 (HLFE…EHSS). Composition is skewed to polar residues over residues 627 to 644 (SLLS…SSAN) and 723 to 736 (SRSG…LTGE).

Interacts with SKP1 and CDC53. Component of the probable SCF(YBR352W) complex containing CDC53, SKP1, RBX1 and YBR352W.

It functions in the pathway protein modification; protein ubiquitination. Functionally, substrate recognition component of a SCF (SKP1-CUL1-F-box protein) E3 ubiquitin-protein ligase complex which mediates the ubiquitination and subsequent proteasomal degradation of target proteins. Probably recognizes and binds to phosphorylated target proteins. This Saccharomyces cerevisiae (strain ATCC 204508 / S288c) (Baker's yeast) protein is F-box protein YLR352W.